The chain runs to 57 residues: Granulin-2 (57 aa).

Intrachain disulfides connect C4–C16 and C10–C26.

It belongs to the granulin family. Granulins are disulfide bridged. In terms of tissue distribution, ubiquitous.

The protein localises to the secreted. In terms of biological role, granulins have possible cytokine-like activity. They may play a role in inflammation, wound repair, and tissue remodeling. In Cyprinus carpio (Common carp), this protein is Granulin-2.